A 155-amino-acid polypeptide reads, in one-letter code: Small ribosomal subunit protein uS7cz/uS7cy (155 aa).

It belongs to the universal ribosomal protein uS7 family. As to quaternary structure, part of the 30S ribosomal subunit.

It is found in the plastid. The protein localises to the chloroplast. In terms of biological role, one of the primary rRNA binding proteins, it binds directly to 16S rRNA where it nucleates assembly of the head domain of the 30S subunit. In Populus trichocarpa (Western balsam poplar), this protein is Small ribosomal subunit protein uS7cz/uS7cy (rps7-A).